A 314-amino-acid chain; its full sequence is L-lactate dehydrogenase 2 (314 aa).

NAD(+)-binding positions include Val-16, Asp-37, Lys-42, Tyr-68, and 82–83 (GL). Substrate is bound by residues Gln-85, Arg-91, and 123 to 126 (NPVD). NAD(+) is bound by residues 121 to 123 (ATN) and Ser-146. 151–154 (DSAR) lines the substrate pocket. The beta-D-fructose 1,6-bisphosphate site is built by Arg-156 and His-171. His-178 functions as the Proton acceptor in the catalytic mechanism. The residue at position 223 (Tyr-223) is a Phosphotyrosine. Thr-232 serves as a coordination point for substrate.

Belongs to the LDH/MDH superfamily. LDH family. As to quaternary structure, homotetramer.

The protein resides in the cytoplasm. The catalysed reaction is (S)-lactate + NAD(+) = pyruvate + NADH + H(+). Its pathway is fermentation; pyruvate fermentation to lactate; (S)-lactate from pyruvate: step 1/1. Its activity is regulated as follows. Allosterically activated by fructose 1,6-bisphosphate (FBP). Its function is as follows. Catalyzes the conversion of lactate to pyruvate. The polypeptide is L-lactate dehydrogenase 2 (Bacillus cereus (strain ATCC 14579 / DSM 31 / CCUG 7414 / JCM 2152 / NBRC 15305 / NCIMB 9373 / NCTC 2599 / NRRL B-3711)).